A 138-amino-acid polypeptide reads, in one-letter code: Small ribosomal subunit protein uS11c (138 aa).

The segment at 1–22 (MAKPILRVGSRKNTRSASRKNV) is disordered. A compositionally biased stretch (basic residues) spans 9 to 22 (GSRKNTRSASRKNV).

It belongs to the universal ribosomal protein uS11 family. In terms of assembly, part of the 30S ribosomal subunit.

Its subcellular location is the plastid. The protein resides in the chloroplast. This chain is Small ribosomal subunit protein uS11c, found in Draba nemorosa (Woodland whitlowgrass).